The sequence spans 82 residues: Large ribosomal subunit protein bL27 (82 aa).

Residues 1–21 (MAHKKGASSSRNGRDSNAKRL) are disordered.

This sequence belongs to the bacterial ribosomal protein bL27 family.

The chain is Large ribosomal subunit protein bL27 from Tropheryma whipplei (strain Twist) (Whipple's bacillus).